Reading from the N-terminus, the 289-residue chain is tRNA-cytidine(32) 2-sulfurtransferase (289 aa).

The short motif at 39–44 (SGGKDS) is the PP-loop motif element. 3 residues coordinate [4Fe-4S] cluster: C114, C117, and C205.

The protein belongs to the TtcA family. Homodimer. Mg(2+) serves as cofactor. [4Fe-4S] cluster is required as a cofactor.

It localises to the cytoplasm. The catalysed reaction is cytidine(32) in tRNA + S-sulfanyl-L-cysteinyl-[cysteine desulfurase] + AH2 + ATP = 2-thiocytidine(32) in tRNA + L-cysteinyl-[cysteine desulfurase] + A + AMP + diphosphate + H(+). Its pathway is tRNA modification. Catalyzes the ATP-dependent 2-thiolation of cytidine in position 32 of tRNA, to form 2-thiocytidine (s(2)C32). The sulfur atoms are provided by the cysteine/cysteine desulfurase (IscS) system. The polypeptide is tRNA-cytidine(32) 2-sulfurtransferase (Deinococcus geothermalis (strain DSM 11300 / CIP 105573 / AG-3a)).